The primary structure comprises 213 residues: Small ribosomal subunit protein uS4 (213 aa).

The segment at Gly16 to Ser53 is disordered. Polar residues predominate over residues Val44–Ser53. The 67-residue stretch at Ser97 to Lys163 folds into the S4 RNA-binding domain.

The protein belongs to the universal ribosomal protein uS4 family. In terms of assembly, part of the 30S ribosomal subunit. Contacts protein S5. The interaction surface between S4 and S5 is involved in control of translational fidelity.

Its function is as follows. One of the primary rRNA binding proteins, it binds directly to 16S rRNA where it nucleates assembly of the body of the 30S subunit. Functionally, with S5 and S12 plays an important role in translational accuracy. This Psychrobacter cryohalolentis (strain ATCC BAA-1226 / DSM 17306 / VKM B-2378 / K5) protein is Small ribosomal subunit protein uS4.